A 300-amino-acid polypeptide reads, in one-letter code: Lysenin-related protein 2 (300 aa).

An N-terminal cap domain region spans residues 12–35 (EQIEVDVVAVWKEGYVYENRGSTS). Residues 36-109 (VEQKIKITKG…SKEIEHTITI (74 aa)) form a beta-hairpin domain region. The N-terminal cap domain stretch occupies residues 110–158 (PPTSKFTRWQLNADVGGADIEYMYLIDEVTPIGGTLSIPQVIKSRAKIL). The C-terminal receptor-binding domain stretch occupies residues 159 to 299 (VGREIYLGET…EDKWILEVVK (141 aa)). An N-(acyl)-sphingosylphosphocholine-binding residues include Lys-187, Ser-229, Tyr-235, and Tyr-284. Residues Cys-274 and Cys-285 are joined by a disulfide bond.

Belongs to the lysenin family. Binds to sphingomyelin as a monomer by using its C-terminal domain. Forms a nonamer when sphingomyelin/LRP-2 ratio is lower than ca 500. Oligomerization, but not binding, is influenced by the fluidity of sphingomyelin. As to expression, expressed by coelomocytes.

It is found in the secreted. The protein resides in the target cell membrane. In terms of biological role, pore-forming toxin that specifically binds sphingomyelin in the plasma membrane of various cells. Has hemolytic activity. It also has antibacterial activities against B.megaterium. The sequence is that of Lysenin-related protein 2 from Eisenia fetida (Red wiggler worm).